Here is a 266-residue protein sequence, read N- to C-terminus: Interleukin-1 beta (266 aa).

Positions 1-113 (MAPVPEPINE…ETSSDEFLCD (113 aa)) are excised as a propeptide.

Belongs to the IL-1 family. As to quaternary structure, monomer. In its precursor form, weakly interacts with full-length MEFV; the mature cytokine does not interact at all. Interacts with integrins ITGAV:ITGBV and ITGA5:ITGB1; integrin-binding is required for IL1B signaling. Interacts with cargo receptor TMED10; the interaction is direct and is required for the secretion of IL1B mature form. Interacts with HSP90AB1; the interaction facilitates cargo translocation into the ERGIC. Interacts with HSP90B1; the interaction facilitates cargo translocation into the ERGIC.

It localises to the cytoplasm. The protein resides in the cytosol. Its subcellular location is the secreted. The protein localises to the lysosome. It is found in the extracellular exosome. Potent pro-inflammatory cytokine. Initially discovered as the major endogenous pyrogen, induces prostaglandin synthesis, neutrophil influx and activation, T-cell activation and cytokine production, B-cell activation and antibody production, and fibroblast proliferation and collagen production. Promotes Th17 differentiation of T-cells. Synergizes with IL12/interleukin-12 to induce IFNG synthesis from T-helper 1 (Th1) cells. Plays a role in angiogenesis by inducing VEGF production synergistically with TNF and IL6. Involved in transduction of inflammation downstream of pyroptosis: its mature form is specifically released in the extracellular milieu by passing through the gasdermin-D (GSDMD) pore. In Cervus elaphus (Red deer), this protein is Interleukin-1 beta (IL1B).